Here is a 248-residue protein sequence, read N- to C-terminus: Neurotrophic factor BDNF precursor form (248 aa).

The first 18 residues, 1–18 (MTILFLTMVISYFSCMKA), serve as a signal peptide directing secretion. Residues 19–129 (APMKEANVRG…AANMSMRVRR (111 aa)) constitute a propeptide that is removed on maturation. N-linked (GlcNAc...) asparagine glycosylation occurs at Asn122. Intrachain disulfides connect Cys142/Cys209, Cys187/Cys238, and Cys197/Cys240.

This sequence belongs to the NGF-beta family. Monomers and homodimers. Binds to NTRK2/TRKB. Can form heterodimers with other neurotrophin family members, such as NTF3 and NTF4 (in vitro), but the physiological relevance of this is not clear. BDNF precursor form: interacts with the heterodimer formed by NGFR and SORCS2. Mature BDNF has much lower affinity for the heterodimer formed by NGFR and SORCS2. Post-translationally, N-glycosylated and glycosulfated, contrary to mature BDNF. In terms of processing, mature BDNF is produced by proteolytic removal of the propeptide, catalyzed by a FURIN family member. In addition, the precursor form is proteolytically cleaved within the propeptide, but this is not an obligatory intermediate for the production of mature BDNF. Can be converted into mature BDNF by plasmin (PLG).

It is found in the secreted. In terms of biological role, important signaling molecule that activates signaling cascades downstream of NTRK2. During development, promotes the survival and differentiation of selected neuronal populations of the peripheral and central nervous systems. Participates in axonal growth, pathfinding and in the modulation of dendritic growth and morphology. Major regulator of synaptic transmission and plasticity at adult synapses in many regions of the CNS. The versatility of BDNF is emphasized by its contribution to a range of adaptive neuronal responses including long-term potentiation (LTP), long-term depression (LTD), certain forms of short-term synaptic plasticity, as well as homeostatic regulation of intrinsic neuronal excitability. Important signaling molecule that activates signaling cascades downstream of NTRK2. Activates signaling cascades via the heterodimeric receptor formed by NGFR and SORCS2. Signaling via NGFR and SORCS2 plays a role in synaptic plasticity and long-term depression (LTD). Binding to NGFR and SORCS2 promotes neuronal apoptosis. Promotes neuronal growth cone collapse. The chain is Neurotrophic factor BDNF precursor form (BDNF) from Lipotes vexillifer (Yangtze river dolphin).